We begin with the raw amino-acid sequence, 165 residues long: Pro-MCH (165 aa).

The signal sequence occupies residues 1–21 (MAKMTLSSYMLMLAFSLFSQG). The interval 66-89 (YKNDESGFMNDDDNKNSKNTGSKQ) is disordered. I143 is modified (isoleucine amide). C153 and C162 are disulfide-bonded.

Belongs to the MCH family. In terms of processing, pro-MCH is processed differentially in the brain and in peripheral organs producing two neuropeptides; NEI and MCH. A third peptide, NGE, may also be produced. Preferential processing in neurons by prohormone convertase 2 (PC2) generates NEI. MCH is generated in neurons of the lateral hypothalmic area by several prohormone convertases including PC1/3, PC2 and PC5/6. Predominantly expressed in hypothalamus. Also found in heart, intestine, spleen and testis (spermatogonia, early spermatocytes and Sertoli cells). In brain only mature MCH and NEI peptides are present. In peripheral tissues a large product, encompassing the NEI and MCH domains of the precursor, is found predominantly.

Its subcellular location is the secreted. In terms of biological role, MCH may act as a neurotransmitter or neuromodulator in a broad array of neuronal functions directed toward the regulation of goal-directed behavior, such as food intake, and general arousal. In Mus musculus (Mouse), this protein is Pro-MCH (Pmch).